Consider the following 661-residue polypeptide: Pseudouridylate synthase 7 homolog (661 aa).

Methionine 1 carries the N-acetylmethionine modification. A disordered region spans residues 1–97 (MEMTEMTGVS…GLSEECEEEE (97 aa)). At serine 10 the chain carries Phosphoserine. Positions 36–52 (SECSLTKGQDGLQNDFL) are enriched in polar residues. The span at 77–97 (QLEDEEEEEEDGLSEECEEEE) shows a compositional bias: acidic residues. Residue serine 127 is modified to Phosphoserine. The active-site Nucleophile is the aspartate 294. Residues 370–580 (GFINYYGMQR…SGAYRKIIIR (211 aa)) form the TRUD domain. Threonine 610 is subject to Phosphothreonine.

The protein belongs to the pseudouridine synthase TruD family. Interacts with SIRT1.

The protein localises to the nucleus. It catalyses the reaction a uridine in tRNA = a pseudouridine in tRNA. The enzyme catalyses uridine(13) in tRNA = pseudouridine(13) in tRNA. The catalysed reaction is a uridine in mRNA = a pseudouridine in mRNA. Functionally, pseudouridylate synthase that catalyzes pseudouridylation of RNAs. Acts as a regulator of protein synthesis in embryonic stem cells by mediating pseudouridylation of RNA fragments derived from tRNAs (tRFs): pseudouridylated tRFs inhibit translation by targeting the translation initiation complex. Also catalyzes pseudouridylation of mRNAs: mediates pseudouridylation of mRNAs with the consensus sequence 5'-UGUAG-3'. Acts as a regulator of pre-mRNA splicing by mediating pseudouridylation of pre-mRNAs at locations associated with alternatively spliced regions. Pseudouridylation of pre-mRNAs near splice sites directly regulates mRNA splicing and mRNA 3'-end processing. In addition to mRNAs and tRNAs, binds other types of RNAs, such as snRNAs, Y RNAs and vault RNAs, suggesting that it can catalyze pseudouridylation of many RNA types. In Homo sapiens (Human), this protein is Pseudouridylate synthase 7 homolog.